A 177-amino-acid polypeptide reads, in one-letter code: ATP synthase subunit delta (177 aa).

Belongs to the ATPase delta chain family. In terms of assembly, F-type ATPases have 2 components, F(1) - the catalytic core - and F(0) - the membrane proton channel. F(1) has five subunits: alpha(3), beta(3), gamma(1), delta(1), epsilon(1). F(0) has three main subunits: a(1), b(2) and c(10-14). The alpha and beta chains form an alternating ring which encloses part of the gamma chain. F(1) is attached to F(0) by a central stalk formed by the gamma and epsilon chains, while a peripheral stalk is formed by the delta and b chains.

It is found in the cell membrane. F(1)F(0) ATP synthase produces ATP from ADP in the presence of a proton or sodium gradient. F-type ATPases consist of two structural domains, F(1) containing the extramembraneous catalytic core and F(0) containing the membrane proton channel, linked together by a central stalk and a peripheral stalk. During catalysis, ATP synthesis in the catalytic domain of F(1) is coupled via a rotary mechanism of the central stalk subunits to proton translocation. In terms of biological role, this protein is part of the stalk that links CF(0) to CF(1). It either transmits conformational changes from CF(0) to CF(1) or is implicated in proton conduction. This chain is ATP synthase subunit delta, found in Exiguobacterium sp. (strain ATCC BAA-1283 / AT1b).